Consider the following 369-residue polypeptide: Maltose/maltodextrin import ATP-binding protein MalK (369 aa).

Positions 4–234 (VQLRNVTKAW…PADRFVAGFI (231 aa)) constitute an ABC transporter domain. 36–43 (GPSGCGKS) contacts ATP.

It belongs to the ABC transporter superfamily. Maltooligosaccharide importer (TC 3.A.1.1.1) family. In terms of assembly, the complex is composed of two ATP-binding proteins (MalK), two transmembrane proteins (MalG and MalK) and a solute-binding protein (MalE).

The protein resides in the cell inner membrane. It catalyses the reaction D-maltose(out) + ATP + H2O = D-maltose(in) + ADP + phosphate + H(+). Functionally, part of the ABC transporter complex MalEFGK involved in maltose/maltodextrin import. Responsible for energy coupling to the transport system. The chain is Maltose/maltodextrin import ATP-binding protein MalK from Salmonella paratyphi A (strain ATCC 9150 / SARB42).